The primary structure comprises 225 residues: Cyclin-dependent kinase inhibitor 3 (225 aa).

Disordered regions lie at residues 47–94 and 130–169; these read AAAA…QRRR and ERKSLKPNSCSREVAAEHAGEHKHNPAAAAAAGRRPPLSP. The span at 55-67 shows a compositional bias: basic residues; the sequence is CRRRHRRGGRRGC. Positions 71 to 82 are enriched in low complexity; sequence GAGSARACGARS. Residues 143–153 show a composition bias toward basic and acidic residues; that stretch reads VAAEHAGEHKH.

The protein belongs to the CDI family. ICK/KRP subfamily.

This Oryza sativa subsp. japonica (Rice) protein is Cyclin-dependent kinase inhibitor 3 (KRP3).